The sequence spans 216 residues: MQKFTVHQGLVAPMDRENVDTDAIIPKQFLKSIRKTGFGPNLFDEWRYLDAGFPGQDPASRKPNPDFVLNQARYKGASILLARKNFGCGSSREHAPWALDQFGFRAIIAPSYADIFFNNSFKNGLLPIVLPEAQVAQLFDEALAFPGYTLTIDLERQVIVKAQGEELPFDVQAFRKYCLLNGFDDIGLTLLQSDKIKAFEAQRLAGKPWLSHTVAG.

Belongs to the LeuD family. LeuD type 1 subfamily. As to quaternary structure, heterodimer of LeuC and LeuD.

It carries out the reaction (2R,3S)-3-isopropylmalate = (2S)-2-isopropylmalate. It participates in amino-acid biosynthesis; L-leucine biosynthesis; L-leucine from 3-methyl-2-oxobutanoate: step 2/4. Its function is as follows. Catalyzes the isomerization between 2-isopropylmalate and 3-isopropylmalate, via the formation of 2-isopropylmaleate. The chain is 3-isopropylmalate dehydratase small subunit from Polaromonas naphthalenivorans (strain CJ2).